Here is a 401-residue protein sequence, read N- to C-terminus: Sodium/glutamate symporter (401 aa).

At 1-6 (MFHLDT) the chain is on the periplasmic side. The chain crosses the membrane as a helical span at residues 7 to 24 (LATLVAATLTLLLGRKLV). Topologically, residues 25–32 (HSVSFLKK) are cytoplasmic. The chain crosses the membrane as a helical span at residues 33 to 52 (YTIPEPVAGGLLVALALLVL). Over 53 to 69 (KKSMGWEVNFDMSLRDP) the chain is Periplasmic. The helical transmembrane segment at 70-87 (LMLAFFATIGLNANIASL) threads the bilayer. Topologically, residues 88-93 (RAGGRV) are cytoplasmic. A helical transmembrane segment spans residues 94-116 (VGIFLIVVVGLLVMQNAIGIGMA). At 117-156 (SLLGLDPLMGLLAGSITLSGGHGTGAAWSKLFIERYGFTN) the chain is on the periplasmic side. The helical transmembrane segment at 157–179 (ATEVAMACATFGLVLGGLIGGPV) threads the bilayer. Over 180–212 (ARYLVKHSTTPNGIPDDQEVPTAFEKPDVGRMI) the chain is Cytoplasmic. A helical transmembrane segment spans residues 213 to 235 (TSLVLIETIALIAICLTVGKIVA). Residues 236-244 (QLLAGTAFE) are Periplasmic-facing. The helical transmembrane segment at 245-267 (LPTFVCVLFVGVILSNGLSIMGF) threads the bilayer. Topologically, residues 268-276 (YRVFERAVS) are cytoplasmic. A helical transmembrane segment spans residues 277-292 (VLGNVSLSLFLAMALM). At 293-301 (GLKLWELAS) the chain is on the periplasmic side. Residues 302–324 (LALPMLAILVVQTIFMALYAIFV) form a helical membrane-spanning segment. The Cytoplasmic portion of the chain corresponds to 325–367 (TWRMMGKNYDAAVLAAGHCGFGLGATPTAIANMQAITERFGPS). Residues 368–390 (HMAFLVVPMVGAFFIDIVNALVI) form a helical membrane-spanning segment. Residues 391 to 401 (KLYLMLPIFAG) are Periplasmic-facing.

This sequence belongs to the glutamate:Na(+) symporter (ESS) (TC 2.A.27) family.

Its subcellular location is the cell inner membrane. Its activity is regulated as follows. Inhibited by the uncoupler carbonylcyanide m-chlorophenylhydrazone (CCCP) and the ionophore monensin. Functionally, catalyzes the sodium-dependent, binding-protein-independent transport of glutamate. This is Sodium/glutamate symporter from Escherichia coli (strain K12).